Here is a 452-residue protein sequence, read N- to C-terminus: Trigger factor (452 aa).

The PPIase FKBP-type domain maps to 171 to 256 (GDRVTVSFKG…ATKLEAPQET (86 aa)).

This sequence belongs to the FKBP-type PPIase family. Tig subfamily.

Its subcellular location is the cytoplasm. It catalyses the reaction [protein]-peptidylproline (omega=180) = [protein]-peptidylproline (omega=0). Functionally, involved in protein export. Acts as a chaperone by maintaining the newly synthesized protein in an open conformation. Functions as a peptidyl-prolyl cis-trans isomerase. This Rhodopseudomonas palustris (strain ATCC BAA-98 / CGA009) protein is Trigger factor.